A 276-amino-acid polypeptide reads, in one-letter code: Rhamnulose-1-phosphate aldolase (276 aa).

The active site involves Glu-117. Positions 141, 143, and 212 each coordinate Zn(2+).

This sequence belongs to the aldolase class II family. RhaD subfamily. Homotetramer. The cofactor is Zn(2+).

It is found in the cytoplasm. It catalyses the reaction L-rhamnulose 1-phosphate = (S)-lactaldehyde + dihydroxyacetone phosphate. It functions in the pathway carbohydrate degradation; L-rhamnose degradation; glycerone phosphate from L-rhamnose: step 3/3. Functionally, catalyzes the reversible cleavage of L-rhamnulose-1-phosphate to dihydroxyacetone phosphate (DHAP) and L-lactaldehyde. This is Rhamnulose-1-phosphate aldolase from Klebsiella pneumoniae subsp. pneumoniae (strain ATCC 700721 / MGH 78578).